The chain runs to 465 residues: UDP-N-acetylmuramate--L-alanine ligase (465 aa).

112-118 provides a ligand contact to ATP; the sequence is GTHGKTT.

The protein belongs to the MurCDEF family.

It is found in the cytoplasm. The catalysed reaction is UDP-N-acetyl-alpha-D-muramate + L-alanine + ATP = UDP-N-acetyl-alpha-D-muramoyl-L-alanine + ADP + phosphate + H(+). Its pathway is cell wall biogenesis; peptidoglycan biosynthesis. Functionally, cell wall formation. The polypeptide is UDP-N-acetylmuramate--L-alanine ligase (Burkholderia cenocepacia (strain HI2424)).